We begin with the raw amino-acid sequence, 187 residues long: MSKSASRARLADIIRTRSFGRGEITLASGRKSDFYFNLKPTMLDPEGAALLAELTYETLRDEKVDYVGGLEMGAVPLAGAIAQLSWLKNHPISAFFVRKKPKEHGARLSVEGLAKGESLAGKRCVIVEDVTTTGGSAIKAVEAVKESGAEIVLVLTMVDREEGATEAFAAAGLPFRSLYKASEFLNV.

5-phospho-alpha-D-ribose 1-diphosphate-binding positions include Arg-98, Lys-99, Lys-102, His-104, and 128-136 (EDVTTTGGS). Residues Thr-132 and Arg-160 each coordinate orotate.

It belongs to the purine/pyrimidine phosphoribosyltransferase family. PyrE subfamily. Homodimer. It depends on Mg(2+) as a cofactor.

The enzyme catalyses orotidine 5'-phosphate + diphosphate = orotate + 5-phospho-alpha-D-ribose 1-diphosphate. Its pathway is pyrimidine metabolism; UMP biosynthesis via de novo pathway; UMP from orotate: step 1/2. Functionally, catalyzes the transfer of a ribosyl phosphate group from 5-phosphoribose 1-diphosphate to orotate, leading to the formation of orotidine monophosphate (OMP). This Rhodopseudomonas palustris (strain TIE-1) protein is Orotate phosphoribosyltransferase.